The sequence spans 176 residues: NAD(P)H-quinone oxidoreductase subunit 6, chloroplastic (176 aa).

5 consecutive transmembrane segments (helical) span residues 10–30 (FLLV…ILFT), 33–53 (IFSA…YIIA), 61–81 (AQLL…VMFI), 92–112 (LFTL…FLLI), and 152–172 (FFPP…GAIA).

The protein belongs to the complex I subunit 6 family. As to quaternary structure, NDH is composed of at least 16 different subunits, 5 of which are encoded in the nucleus.

The protein resides in the plastid. Its subcellular location is the chloroplast thylakoid membrane. The catalysed reaction is a plastoquinone + NADH + (n+1) H(+)(in) = a plastoquinol + NAD(+) + n H(+)(out). The enzyme catalyses a plastoquinone + NADPH + (n+1) H(+)(in) = a plastoquinol + NADP(+) + n H(+)(out). NDH shuttles electrons from NAD(P)H:plastoquinone, via FMN and iron-sulfur (Fe-S) centers, to quinones in the photosynthetic chain and possibly in a chloroplast respiratory chain. The immediate electron acceptor for the enzyme in this species is believed to be plastoquinone. Couples the redox reaction to proton translocation, and thus conserves the redox energy in a proton gradient. The protein is NAD(P)H-quinone oxidoreductase subunit 6, chloroplastic (ndhG) of Fagopyrum esculentum subsp. ancestrale (Wild buckwheat).